A 160-amino-acid polypeptide reads, in one-letter code: Transcription antitermination protein NusB (160 aa).

The protein belongs to the NusB family.

Its function is as follows. Involved in transcription antitermination. Required for transcription of ribosomal RNA (rRNA) genes. Binds specifically to the boxA antiterminator sequence of the ribosomal RNA (rrn) operons. In Rhizobium meliloti (strain 1021) (Ensifer meliloti), this protein is Transcription antitermination protein NusB.